Reading from the N-terminus, the 132-residue chain is Ribosome-binding factor A (132 aa).

This sequence belongs to the RbfA family. In terms of assembly, monomer. Binds 30S ribosomal subunits, but not 50S ribosomal subunits or 70S ribosomes.

It localises to the cytoplasm. Its function is as follows. One of several proteins that assist in the late maturation steps of the functional core of the 30S ribosomal subunit. Associates with free 30S ribosomal subunits (but not with 30S subunits that are part of 70S ribosomes or polysomes). Required for efficient processing of 16S rRNA. May interact with the 5'-terminal helix region of 16S rRNA. This chain is Ribosome-binding factor A, found in Prochlorococcus marinus (strain MIT 9515).